The primary structure comprises 506 residues: Transforming growth factor beta-1-induced transcript 1 protein (506 aa).

Positions 3 to 15 (DLDALLADLQITT) match the LD motif 1 motif. Residues 15–62 (TPPRCPVLLTDSPEKPQPTETRPPPPPYDPKTAMSNKTSDHETFPVDK) form a disordered region. A compositionally biased stretch (basic and acidic residues) spans 52–62 (TSDHETFPVDK). Short sequence motifs (LD motif) lie at residues 87-99 (ELDRLLNELNATQ) and 139-150 (ELDRLMASLSDF). 2 disordered regions span residues 154-201 (NTVS…PTPK) and 221-244 (SDEVTASRVPDSVSGSKVPEATSV). The segment covering 168 to 177 (GSEEVSRPGD) has biased composition (basic and acidic residues). The LD motif 4 motif lies at 248–260 (DLDSMLVKLQSGL). 4 LIM zinc-binding domains span residues 271-330 (GLCE…LYAP), 331-388 (RCAL…RLFG), 389-448 (AVCA…RRGS), and 449-506 (LCAG…RLYG).

This sequence belongs to the paxillin family. As to quaternary structure, interacts with tcf3 and tcf7l2.

Its subcellular location is the cell junction. The protein resides in the focal adhesion. The protein localises to the nucleus matrix. It localises to the cytoplasm. It is found in the cytoskeleton. Its function is as follows. Functions as a molecular adapter coordinating multiple protein-protein interactions at the focal adhesion complex and in the nucleus. May regulate both Wnt and steroid signaling pathways and play a role in the processes of cell growth, proliferation, migration, differentiation and senescence. May have a zinc-dependent DNA-binding activity. The polypeptide is Transforming growth factor beta-1-induced transcript 1 protein (tgfb1i1) (Xenopus laevis (African clawed frog)).